Reading from the N-terminus, the 82-residue chain is Putative membrane protein insertion efficiency factor (82 aa).

It belongs to the UPF0161 family.

It localises to the cell inner membrane. Functionally, could be involved in insertion of integral membrane proteins into the membrane. The chain is Putative membrane protein insertion efficiency factor from Thermus thermophilus (strain ATCC BAA-163 / DSM 7039 / HB27).